The chain runs to 503 residues: Aromatase (503 aa).

The chain crosses the membrane as a helical span at residues 21 to 41 (VTVSAMPLLLIMGLLLLIWNC). Substrate contacts are provided by aspartate 309 and methionine 374. Cysteine 437 lines the heme pocket.

The protein belongs to the cytochrome P450 family. The cofactor is heme.

The protein resides in the endoplasmic reticulum membrane. The protein localises to the microsome membrane. It catalyses the reaction testosterone + 3 reduced [NADPH--hemoprotein reductase] + 3 O2 = 17beta-estradiol + formate + 3 oxidized [NADPH--hemoprotein reductase] + 4 H2O + 4 H(+). The enzyme catalyses androst-4-ene-3,17-dione + 3 reduced [NADPH--hemoprotein reductase] + 3 O2 = estrone + formate + 3 oxidized [NADPH--hemoprotein reductase] + 4 H2O + 4 H(+). The catalysed reaction is androst-4-ene-3,17-dione + reduced [NADPH--hemoprotein reductase] + O2 = 19-hydroxyandrost-4-ene-3,17-dione + oxidized [NADPH--hemoprotein reductase] + H2O + H(+). It carries out the reaction 19-hydroxyandrost-4-ene-3,17-dione + reduced [NADPH--hemoprotein reductase] + O2 = 19-oxo-androst-4-ene-3,17-dione + oxidized [NADPH--hemoprotein reductase] + 2 H2O + H(+). It catalyses the reaction 19-oxo-androst-4-ene-3,17-dione + reduced [NADPH--hemoprotein reductase] + O2 = estrone + formate + oxidized [NADPH--hemoprotein reductase] + H2O + 2 H(+). The enzyme catalyses estrone + reduced [NADPH--hemoprotein reductase] + O2 = 2-hydroxyestrone + oxidized [NADPH--hemoprotein reductase] + H2O + H(+). The catalysed reaction is 17beta-hydroxy-5alpha-androstan-3-one + reduced [NADPH--hemoprotein reductase] + O2 = 17beta,19-dihydroxy-3-oxo-5alpha-androstanone + oxidized [NADPH--hemoprotein reductase] + H2O + H(+). It carries out the reaction 17beta,19-dihydroxy-3-oxo-5alpha-androstanone + reduced [NADPH--hemoprotein reductase] + O2 = 17beta-hydroxy-3,19-dioxo-5alpha-androstanone + oxidized [NADPH--hemoprotein reductase] + 2 H2O + H(+). It catalyses the reaction 17beta-hydroxy-3,19-dioxo-5alpha-androstanone + reduced [NADPH--hemoprotein reductase] + O2 = 17beta-hydroxy-3-oxo-19-nor-5alpha-androst-1-ene + formate + oxidized [NADPH--hemoprotein reductase] + H2O + 2 H(+). The protein operates within steroid hormone biosynthesis. In terms of biological role, a cytochrome P450 monooxygenase that catalyzes the conversion of C19 androgens, androst-4-ene-3,17-dione (androstenedione) and testosterone to the C18 estrogens, estrone and estradiol, respectively. Catalyzes three successive oxidations of C19 androgens: two conventional oxidations at C19 yielding 19-hydroxy and 19-oxo/19-aldehyde derivatives, followed by a third oxidative aromatization step that involves C1-beta hydrogen abstraction combined with cleavage of the C10-C19 bond to yield a phenolic A ring and formic acid. Alternatively, the third oxidative reaction yields a 19-norsteroid and formic acid. Converts dihydrotestosterone to delta1,10-dehydro 19-nordihydrotestosterone and may play a role in homeostasis of this potent androgen. Also displays 2-hydroxylase activity toward estrone. Mechanistically, uses molecular oxygen inserting one oxygen atom into a substrate, and reducing the second into a water molecule, with two electrons provided by NADPH via cytochrome P450 reductase (CPR; NADPH-ferrihemoprotein reductase). This Mus musculus (Mouse) protein is Aromatase (Cyp19a1).